The sequence spans 345 residues: N-acetyl-gamma-glutamyl-phosphate reductase (345 aa).

The active site involves C149.

Belongs to the NAGSA dehydrogenase family. Type 1 subfamily.

The protein resides in the cytoplasm. It carries out the reaction N-acetyl-L-glutamate 5-semialdehyde + phosphate + NADP(+) = N-acetyl-L-glutamyl 5-phosphate + NADPH + H(+). Its pathway is amino-acid biosynthesis; L-arginine biosynthesis; N(2)-acetyl-L-ornithine from L-glutamate: step 3/4. Its function is as follows. Catalyzes the NADPH-dependent reduction of N-acetyl-5-glutamyl phosphate to yield N-acetyl-L-glutamate 5-semialdehyde. The polypeptide is N-acetyl-gamma-glutamyl-phosphate reductase (Bacillus anthracis).